The sequence spans 170 residues: Protein-export protein SecB (170 aa).

Belongs to the SecB family. As to quaternary structure, homotetramer, a dimer of dimers. One homotetramer interacts with 1 SecA dimer.

Its subcellular location is the cytoplasm. Functionally, one of the proteins required for the normal export of preproteins out of the cell cytoplasm. It is a molecular chaperone that binds to a subset of precursor proteins, maintaining them in a translocation-competent state. It also specifically binds to its receptor SecA. In Pasteurella multocida (strain Pm70), this protein is Protein-export protein SecB.